A 213-amino-acid polypeptide reads, in one-letter code: Orotidine 5'-phosphate decarboxylase (213 aa).

Residues D6, K25, 52-61 (DLKLADIDNT), S109, 158-168 (PGVGAQGAMIG), G181, and R182 contribute to the substrate site. K54 acts as the Proton donor in catalysis.

The protein belongs to the OMP decarboxylase family. Type 1 subfamily. Homodimer.

The enzyme catalyses orotidine 5'-phosphate + H(+) = UMP + CO2. Its pathway is pyrimidine metabolism; UMP biosynthesis via de novo pathway; UMP from orotate: step 2/2. In terms of biological role, catalyzes the decarboxylation of orotidine 5'-monophosphate (OMP) to uridine 5'-monophosphate (UMP). In Sulfurisphaera tokodaii (strain DSM 16993 / JCM 10545 / NBRC 100140 / 7) (Sulfolobus tokodaii), this protein is Orotidine 5'-phosphate decarboxylase.